The following is a 179-amino-acid chain: ATP synthase subunit delta (179 aa).

This sequence belongs to the ATPase delta chain family. As to quaternary structure, F-type ATPases have 2 components, F(1) - the catalytic core - and F(0) - the membrane proton channel. F(1) has five subunits: alpha(3), beta(3), gamma(1), delta(1), epsilon(1). F(0) has three main subunits: a(1), b(2) and c(10-14). The alpha and beta chains form an alternating ring which encloses part of the gamma chain. F(1) is attached to F(0) by a central stalk formed by the gamma and epsilon chains, while a peripheral stalk is formed by the delta and b chains.

It localises to the cell inner membrane. F(1)F(0) ATP synthase produces ATP from ADP in the presence of a proton or sodium gradient. F-type ATPases consist of two structural domains, F(1) containing the extramembraneous catalytic core and F(0) containing the membrane proton channel, linked together by a central stalk and a peripheral stalk. During catalysis, ATP synthesis in the catalytic domain of F(1) is coupled via a rotary mechanism of the central stalk subunits to proton translocation. Its function is as follows. This protein is part of the stalk that links CF(0) to CF(1). It either transmits conformational changes from CF(0) to CF(1) or is implicated in proton conduction. The polypeptide is ATP synthase subunit delta (Burkholderia vietnamiensis (strain G4 / LMG 22486) (Burkholderia cepacia (strain R1808))).